Reading from the N-terminus, the 89-residue chain is MRAVLTVIGKDNVGIVAGVSNKLAELNINIVDVSQTIMDGYFTMMMMCDISQITKEFDEVKTELTGKGEELQVKIHIQREEIFNAMHKL.

An ACT domain is found at 4 to 78 (VLTVIGKDNV…EELQVKIHIQ (75 aa)).

This sequence belongs to the UPF0237 family.

This is UPF0237 protein lin0537 from Listeria innocua serovar 6a (strain ATCC BAA-680 / CLIP 11262).